A 448-amino-acid polypeptide reads, in one-letter code: Probable glycine dehydrogenase (decarboxylating) subunit 1 (448 aa).

This sequence belongs to the GcvP family. N-terminal subunit subfamily. As to quaternary structure, the glycine cleavage system is composed of four proteins: P, T, L and H. In this organism, the P 'protein' is a heterodimer of two subunits.

It catalyses the reaction N(6)-[(R)-lipoyl]-L-lysyl-[glycine-cleavage complex H protein] + glycine + H(+) = N(6)-[(R)-S(8)-aminomethyldihydrolipoyl]-L-lysyl-[glycine-cleavage complex H protein] + CO2. Functionally, the glycine cleavage system catalyzes the degradation of glycine. The P protein binds the alpha-amino group of glycine through its pyridoxal phosphate cofactor; CO(2) is released and the remaining methylamine moiety is then transferred to the lipoamide cofactor of the H protein. This is Probable glycine dehydrogenase (decarboxylating) subunit 1 from Geobacillus kaustophilus (strain HTA426).